Reading from the N-terminus, the 258-residue chain is Phosphate import ATP-binding protein PstB 1 (258 aa).

Positions Leu5–Lys247 constitute an ABC transporter domain. Gly37–Thr44 provides a ligand contact to ATP.

This sequence belongs to the ABC transporter superfamily. Phosphate importer (TC 3.A.1.7) family. As to quaternary structure, the complex is composed of two ATP-binding proteins (PstB), two transmembrane proteins (PstC and PstA) and a solute-binding protein (PstS).

It localises to the cell membrane. It catalyses the reaction phosphate(out) + ATP + H2O = ADP + 2 phosphate(in) + H(+). Functionally, part of the ABC transporter complex PstSACB involved in phosphate import. Responsible for energy coupling to the transport system. This Mycobacterium bovis (strain ATCC BAA-935 / AF2122/97) protein is Phosphate import ATP-binding protein PstB 1.